A 109-amino-acid chain; its full sequence is UPF0060 membrane protein PA3275 (109 aa).

4 helical membrane-spanning segments follow: residues 5-25, 27-47, 59-79, and 84-104; these read FWFVLAAFCEIAGCYAFYLWL, LGKSALWVLPGLLSLTLFALL, AYAAYGGIYVAASLFWLAFVE, and LWSDWLGVALCVVGASVVLFG.

This sequence belongs to the UPF0060 family.

It localises to the cell inner membrane. This Pseudomonas aeruginosa (strain ATCC 15692 / DSM 22644 / CIP 104116 / JCM 14847 / LMG 12228 / 1C / PRS 101 / PAO1) protein is UPF0060 membrane protein PA3275.